A 271-amino-acid chain; its full sequence is Phosphate import ATP-binding protein PstB 1 (271 aa).

The region spanning 25-266 (LTVEHLNLYY…PTQRRTEDYI (242 aa)) is the ABC transporter domain. 57–64 (GPSGCGKS) provides a ligand contact to ATP.

Belongs to the ABC transporter superfamily. Phosphate importer (TC 3.A.1.7) family. The complex is composed of two ATP-binding proteins (PstB), two transmembrane proteins (PstC and PstA) and a solute-binding protein (PstS).

The protein resides in the cell inner membrane. The catalysed reaction is phosphate(out) + ATP + H2O = ADP + 2 phosphate(in) + H(+). In terms of biological role, part of the ABC transporter complex PstSACB involved in phosphate import. Responsible for energy coupling to the transport system. This Pectobacterium atrosepticum (strain SCRI 1043 / ATCC BAA-672) (Erwinia carotovora subsp. atroseptica) protein is Phosphate import ATP-binding protein PstB 1.